The primary structure comprises 390 residues: Altered inheritance of mitochondria protein 6 (390 aa).

The first 17 residues, 1–17 (MLGLKGCLTILIGYVIA), serve as a signal peptide directing secretion.

The protein belongs to the AIM6 family.

This Saccharomyces cerevisiae (strain ATCC 204508 / S288c) (Baker's yeast) protein is Altered inheritance of mitochondria protein 6.